Consider the following 684-residue polypeptide: Probable potassium transport system protein Kup (684 aa).

The next 12 membrane-spanning stretches (helical) occupy residues 19-39, 61-81, 104-124, 151-171, 177-197, 223-243, 255-275, 303-323, 352-372, 381-401, 407-427, and 433-453; these read ALLVTLGVVYGDIGTSPLYVM, VSLIFWTLLIITTVKYVLIAL, WLVLPAMVGGAALLADGMLTP, QVIWVTILIITFLFFIQRFGT, AFGPIMFVWFTFLGVAGFIAL, MGLFILGSIFLATTGAEALYS, LSWPYVNICLVLNYFGQAVWL, LGAIILATLAAIIASQALISG, LYIPVVNTILWLACLAIIGYF, AYGLAITITMLMTTLLLYQYL, PAVIAIGTLIFFSAIETVFFI, and FLHGGYVTAMIAFIILAVMYV.

Belongs to the HAK/KUP transporter (TC 2.A.72) family.

The protein localises to the cell membrane. It carries out the reaction K(+)(in) + H(+)(in) = K(+)(out) + H(+)(out). Functionally, transport of potassium into the cell. Likely operates as a K(+):H(+) symporter. This is Probable potassium transport system protein Kup from Lacticaseibacillus casei (strain BL23) (Lactobacillus casei).